We begin with the raw amino-acid sequence, 904 residues long: Dynamin-like protein C (904 aa).

Residues 44 to 102 (IAEAMALKMHEEEKKKREEKKRKRDNEELLSKQVRTKLENERKKLDDSESINASTNQEL) adopt a coiled-coil conformation. Residues 53 to 93 (HEEEKKKREEKKRKRDNEELLSKQVRTKLENERKKLDDSES) form a disordered region. The span at 67–90 (RDNEELLSKQVRTKLENERKKLDD) shows a compositional bias: basic and acidic residues. The region spanning 119 to 441 (SFDTPELVVV…HEKYQQNLLP (323 aa)) is the Dynamin-type G domain. Residues 129–136 (GMQSDGKS) are G1 motif. Residue 129 to 136 (GMQSDGKS) participates in GTP binding. Positions 155–157 (GTR) are G2 motif. A disordered region spans residues 169–227 (SKQQPSCRFKKEDYSNSYGGSSSSTSTTSGNSNHNTDKQQNVSSSQGGGGGSNNLNEDK). Over residues 183-213 (SNSYGGSSSSTSTTSGNSNHNTDKQQNVSSS) the composition is skewed to low complexity. Residues 278-281 (DTPG) are G3 motif. GTP contacts are provided by residues 278–282 (DTPGF) and 343–346 (TKFD). The segment at 343–346 (TKFD) is G4 motif. Residues 378-381 (LPLK) are G5 motif. Residues 781–811 (EMFQLGLKELENKLHKLEFQLIDCKKNRDKF) are a coiled coil. Disordered stretches follow at residues 821-840 (SLNQNQNQNSSSSSNSASSS) and 853-904 (NGKF…FDQN). Over residues 853-876 (NGKFSTPDKNSLTMSPFTSPFTQS) the composition is skewed to polar residues. Residues 877–891 (NYHQHNNNNYQINQQ) are compositionally biased toward low complexity.

It belongs to the TRAFAC class dynamin-like GTPase superfamily. Dynamin/Fzo/YdjA family.

The protein resides in the cytoplasm. It catalyses the reaction GTP + H2O = GDP + phosphate + H(+). Involved in cytokinesis. May hydrolyze GTP. The chain is Dynamin-like protein C (dlpC) from Dictyostelium discoideum (Social amoeba).